Here is a 554-residue protein sequence, read N- to C-terminus: Esterase cest-33 (554 aa).

Glycine 2 carries N-myristoyl glycine lipidation. Cysteines 76 and 98 form a disulfide. The Acyl-ester intermediate role is filled by serine 208. Active-site charge relay system residues include glutamate 331 and histidine 446.

It belongs to the type-B carboxylesterase/lipase family.

Its subcellular location is the cytoplasm. It is found in the cell membrane. It carries out the reaction a carboxylic ester + H2O = an alcohol + a carboxylate + H(+). The sequence is that of Esterase cest-33 from Caenorhabditis elegans.